A 245-amino-acid chain; its full sequence is Probable transcriptional regulatory protein TP_0474 (245 aa).

This sequence belongs to the TACO1 family.

The protein resides in the cytoplasm. This Treponema pallidum (strain Nichols) protein is Probable transcriptional regulatory protein TP_0474.